The chain runs to 298 residues: Lipoyl synthase (298 aa).

Residues Cys40, Cys45, Cys51, Cys67, Cys71, Cys74, and Ser280 each contribute to the [4Fe-4S] cluster site. A Radical SAM core domain is found at 53 to 269; that stretch reads AVRRTATFMI…KEIAMQKGFS (217 aa).

This sequence belongs to the radical SAM superfamily. Lipoyl synthase family. The cofactor is [4Fe-4S] cluster.

It localises to the cytoplasm. The catalysed reaction is [[Fe-S] cluster scaffold protein carrying a second [4Fe-4S](2+) cluster] + N(6)-octanoyl-L-lysyl-[protein] + 2 oxidized [2Fe-2S]-[ferredoxin] + 2 S-adenosyl-L-methionine + 4 H(+) = [[Fe-S] cluster scaffold protein] + N(6)-[(R)-dihydrolipoyl]-L-lysyl-[protein] + 4 Fe(3+) + 2 hydrogen sulfide + 2 5'-deoxyadenosine + 2 L-methionine + 2 reduced [2Fe-2S]-[ferredoxin]. It functions in the pathway protein modification; protein lipoylation via endogenous pathway; protein N(6)-(lipoyl)lysine from octanoyl-[acyl-carrier-protein]. Its function is as follows. Catalyzes the radical-mediated insertion of two sulfur atoms into the C-6 and C-8 positions of the octanoyl moiety bound to the lipoyl domains of lipoate-dependent enzymes, thereby converting the octanoylated domains into lipoylated derivatives. In Bacillus velezensis (strain DSM 23117 / BGSC 10A6 / LMG 26770 / FZB42) (Bacillus amyloliquefaciens subsp. plantarum), this protein is Lipoyl synthase.